Reading from the N-terminus, the 274-residue chain is Nitrogenase iron protein (274 aa).

Residue 8–15 (GKGGIGKS) participates in ATP binding. [4Fe-4S] cluster is bound at residue Cys-94. Arg-97 bears the ADP-ribosylarginine; by dinitrogenase reductase ADP-ribosyltransferase mark. A [4Fe-4S] cluster-binding site is contributed by Cys-131.

This sequence belongs to the NifH/BchL/ChlL family. Homodimer. It depends on [4Fe-4S] cluster as a cofactor. Post-translationally, the reversible ADP-ribosylation of Arg-97 inactivates the nitrogenase reductase and regulates nitrogenase activity.

It carries out the reaction N2 + 8 reduced [2Fe-2S]-[ferredoxin] + 16 ATP + 16 H2O = H2 + 8 oxidized [2Fe-2S]-[ferredoxin] + 2 NH4(+) + 16 ADP + 16 phosphate + 6 H(+). Its function is as follows. The key enzymatic reactions in nitrogen fixation are catalyzed by the nitrogenase complex, which has 2 components: the iron protein and the molybdenum-iron protein. This is Nitrogenase iron protein from Chlorobium phaeovibrioides (strain DSM 265 / 1930) (Prosthecochloris vibrioformis (strain DSM 265)).